The chain runs to 610 residues: MCGIVGAVAQRDVAEILVEGLRRLEYRGYDSAGVAVVDAEHNYTRIRRLGKVKELADAVETAHVVGGTGIAHTRWATHGEPSEVNAHPHVSGDITLVHNGIIENHESLRTLLQERGYIFESQTDTEVIAHLVEWELRSSGSLLEAVQKTATQLEGAYGTVVMDRREPERLVVARSGSPIVIGCGVGENFLASDQLALLNVTRRFMYLEEGDVAEITRREIRVFDARGEQVERAITESNAEHDAGDKGQYRHFMQKEVFEQPKALINTMEGRITNDSVVTESIGVNAVEILNKVEHVQIIACGTSYNAGMTARYWFESLAGVSCDVEIASEFRYRKFVTRPNSLLITLSQSGETADTLAALRLAKERGYMGAMTVCNVAGSSLVRESDFAFMTRAGTEIGVASTKAFTTQLAALLMLVTALGKQQNRISKEKEKEIVEALHALPAQIEQALSFDKEIEALAPDFADKHHTLFLGRGEFYPIAVEASLKLKEISYIHAEAYAAGELKHGPLALIDAEMPVVVVAPTNDLLEKLKSNVEEVRARGGLLYVFADEQAGFEADESMKIITMPHVSDITAPIYYTIPMQLLSYHVALIKGTDVDQPRNLAKAVTVE.

Residue Cys2 is the Nucleophile; for GATase activity of the active site. One can recognise a Glutamine amidotransferase type-2 domain in the interval 2–218 (CGIVGAVAQR…EGDVAEITRR (217 aa)). SIS domains lie at 286 to 426 (AVEI…QQNR) and 459 to 600 (LAPD…VDQP). Lys605 acts as the For Fru-6P isomerization activity in catalysis.

Homodimer.

The protein localises to the cytoplasm. The enzyme catalyses D-fructose 6-phosphate + L-glutamine = D-glucosamine 6-phosphate + L-glutamate. Its function is as follows. Catalyzes the first step in hexosamine metabolism, converting fructose-6P into glucosamine-6P using glutamine as a nitrogen source. This is Glutamine--fructose-6-phosphate aminotransferase [isomerizing] from Aliivibrio fischeri (strain ATCC 700601 / ES114) (Vibrio fischeri).